The chain runs to 295 residues: Delta-1-pyrroline-5-carboxylate reductase apf3 (295 aa).

The protein belongs to the pyrroline-5-carboxylate reductase family.

It functions in the pathway secondary metabolite biosynthesis. Delta-1-pyrroline-5-carboxylate reductase; part of the gene cluster that mediates the biosynthesis of the cyclic tetrapeptide apicidin F (APF). The non-ribosomal peptide synthetase apf1 incorporates four different amino acids to produce apicidin F: L-phenylalanine, D-pipecolic acid (D-pip), N-methoxy-L-tryptophan and L-2-aminooctanedioic acid. L-Phenylalanine is the only proteinogenic amino acid directly used by apf1. The 3 other apf1 substrates are non-proteinogenic and have to be modified by other enzymes of the cluster. Lysine is converted to delta-1-pyrroline-5-carboxylate (P5C) which is reduced to L-pipecolic acid (L-pip) by apf3. L-pip is epimerized to D-pip, probably by apf1 activity, prior to incorporation. L-Tryptophan is N-oxidyzed by one of the cytochrome P450 monooxygenases (apf7 or apf8), and further methylated at the hydroxy group by the O-methyltransferase apf6 to yield N-methoxy-L-tryptophan. The synthesis of the fourth apf1 substrate is more complex. The fatty acid synthase apf5 is involved in the synthesis of the octanoic acid backbone of L-2-aminooctanedioic acid by fixing one acetyl-CoA unit and three malonyl-CoA units. Then one of the cytochrome P450 monooxygenases (apf7 or apf8) may oxidize this backbone to 2-oxooctanoic acid. The aminotransferase apf4 is predicted to catalyze the exchange of the keto group with an amino group. The next step would be the oxidation of 2-aminooctanoic acid by one of the cytochrome P450 monooxygenases (apf7 or apf8). The last step is the oxidation of 2-amino-8-hydroxyoctanoic acid to 2-aminooctanedioic acid is catalyzed by the FAD-dependent monooxygenase apf9. The sequence is that of Delta-1-pyrroline-5-carboxylate reductase apf3 from Gibberella fujikuroi (strain CBS 195.34 / IMI 58289 / NRRL A-6831) (Bakanae and foot rot disease fungus).